The chain runs to 455 residues: Beta-glucosidase A (455 aa).

The active-site Proton donor is glutamate 165. The Nucleophile role is filled by glutamate 363.

The protein belongs to the glycosyl hydrolase 1 family.

It catalyses the reaction Hydrolysis of terminal, non-reducing beta-D-glucosyl residues with release of beta-D-glucose.. This is Beta-glucosidase A (bglA) from Caldicellulosiruptor saccharolyticus (Caldocellum saccharolyticum).